Here is a 404-residue protein sequence, read N- to C-terminus: D-galactonate dehydratase family member Ent638_1932 (404 aa).

Substrate is bound by residues N37 and H122. The active-site Proton donor/acceptor is Y159. Residue D212 coordinates Mg(2+). H214 serves as the catalytic Proton donor/acceptor. The Mg(2+) site is built by E238 and E264. Residues E264, R285, H314, D318, and E341 each contribute to the substrate site.

This sequence belongs to the mandelate racemase/muconate lactonizing enzyme family. GalD subfamily. Mg(2+) is required as a cofactor.

The enzyme catalyses D-mannonate = 2-dehydro-3-deoxy-D-gluconate + H2O. Has low D-mannonate dehydratase activity (in vitro), suggesting that this is not a physiological substrate and that it has no significant role in D-mannonate degradation in vivo. Has no detectable activity with a panel of 70 other acid sugars (in vitro). The polypeptide is D-galactonate dehydratase family member Ent638_1932 (Enterobacter sp. (strain 638)).